The chain runs to 225 residues: MTQVKTQPPEEVALQLIVGLGNPGPQYANTRHNCGFMVVDQLAERWGIPLALEKRFQGSYGEGFALGGKRRLLKPETYMNRSGEAVRAVLDWYKLDPASVLVVYDDMDLPLGRLRLRGSGSAGGHNGMKSVIEHLGSEAFPRLRLGVGRPKGNQDRVGHVLGSFEPAEQAVLDRVLRAAVAAVECCLQEGLKTAMNRFNPLDFSGPDRQDQPAPLNPAKTAPGES.

Residue Tyr-27 participates in tRNA binding. His-32 (proton acceptor) is an active-site residue. TRNA-binding residues include Tyr-78, Asn-80, and Asn-126. A disordered region spans residues 198–225 (FNPLDFSGPDRQDQPAPLNPAKTAPGES).

This sequence belongs to the PTH family. As to quaternary structure, monomer.

The protein localises to the cytoplasm. The catalysed reaction is an N-acyl-L-alpha-aminoacyl-tRNA + H2O = an N-acyl-L-amino acid + a tRNA + H(+). In terms of biological role, hydrolyzes ribosome-free peptidyl-tRNAs (with 1 or more amino acids incorporated), which drop off the ribosome during protein synthesis, or as a result of ribosome stalling. Functionally, catalyzes the release of premature peptidyl moieties from peptidyl-tRNA molecules trapped in stalled 50S ribosomal subunits, and thus maintains levels of free tRNAs and 50S ribosomes. The polypeptide is Peptidyl-tRNA hydrolase (Synechococcus sp. (strain JA-3-3Ab) (Cyanobacteria bacterium Yellowstone A-Prime)).